The chain runs to 974 residues: Valine--tRNA ligase, chloroplastic/mitochondrial 2 (974 aa).

The 'HIGH' region motif lies at 109-119 (PNVTGSLHMGH). One copy of the LRR 1 repeat lies at 432-454 (LAEKALLAVENKELTIIPERFEK). A coiled-coil region spans residues 489–518 (EEDYIVAKSAEEALEKALEKYGKDVEIYQD). Residues 598-602 (KMSKS) carry the 'KMSKS' region motif. K601 is a binding site for ATP. The LRR 2 repeat unit spans residues 857–880 (LALLSRLDLNNVHFSNAPPGDANL).

Belongs to the class-I aminoacyl-tRNA synthetase family.

The protein localises to the plastid. It is found in the chloroplast. The protein resides in the mitochondrion. The enzyme catalyses tRNA(Val) + L-valine + ATP = L-valyl-tRNA(Val) + AMP + diphosphate. The polypeptide is Valine--tRNA ligase, chloroplastic/mitochondrial 2 (Arabidopsis thaliana (Mouse-ear cress)).